The primary structure comprises 223 residues: ATP-dependent dethiobiotin synthetase BioD (223 aa).

Thr-16 contributes to the Mg(2+) binding site. Lys-37 is an active-site residue. Ser-41 lines the substrate pocket. Positions 50 and 111 each coordinate Mg(2+). Residues Asp-50, 111 to 114 (EGAG), and 171 to 172 (NR) each bind ATP.

Belongs to the dethiobiotin synthetase family. As to quaternary structure, homodimer. It depends on Mg(2+) as a cofactor.

The protein localises to the cytoplasm. The catalysed reaction is (7R,8S)-7,8-diammoniononanoate + CO2 + ATP = (4R,5S)-dethiobiotin + ADP + phosphate + 3 H(+). Its pathway is cofactor biosynthesis; biotin biosynthesis; biotin from 7,8-diaminononanoate: step 1/2. In terms of biological role, catalyzes a mechanistically unusual reaction, the ATP-dependent insertion of CO2 between the N7 and N8 nitrogen atoms of 7,8-diaminopelargonic acid (DAPA, also called 7,8-diammoniononanoate) to form a ureido ring. The protein is ATP-dependent dethiobiotin synthetase BioD of Anaeromyxobacter dehalogenans (strain 2CP-1 / ATCC BAA-258).